We begin with the raw amino-acid sequence, 388 residues long: Phosphopentomutase (388 aa).

Positions 11, 283, 288, 324, 325, and 336 each coordinate Mn(2+).

The protein belongs to the phosphopentomutase family. Requires Mn(2+) as cofactor.

The protein resides in the cytoplasm. It catalyses the reaction 2-deoxy-alpha-D-ribose 1-phosphate = 2-deoxy-D-ribose 5-phosphate. The enzyme catalyses alpha-D-ribose 1-phosphate = D-ribose 5-phosphate. It participates in carbohydrate degradation; 2-deoxy-D-ribose 1-phosphate degradation; D-glyceraldehyde 3-phosphate and acetaldehyde from 2-deoxy-alpha-D-ribose 1-phosphate: step 1/2. Isomerase that catalyzes the conversion of deoxy-ribose 1-phosphate (dRib-1-P) and ribose 1-phosphate (Rib-1-P) to deoxy-ribose 5-phosphate (dRib-5-P) and ribose 5-phosphate (Rib-5-P), respectively. The sequence is that of Phosphopentomutase from Anaeromyxobacter sp. (strain K).